The primary structure comprises 178 residues: MSPPSQLCLLTIVALILPSEGQTPEKPRSSFTAHQSSVTTHVPVPDQTSPGVQTTPPIWTSEAGEATGSQTAAKTKTQQLTEMATANPVTDPGPLTSSEKGTPALSRIKSPSPPKGYMPPSYIENPLDPNENSPFYYDNTTLRKRGLLVAAVLFITGIIILTSGKCRQFSQLCLNRHR.

The N-terminal stretch at 1–21 is a signal peptide; the sequence is MSPPSQLCLLTIVALILPSEG. The tract at residues 21–126 is disordered; the sequence is GQTPEKPRSS…YMPPSYIENP (106 aa). At 22-146 the chain is on the extracellular side; sequence QTPEKPRSSF…YDNTTLRKRG (125 aa). Over residues 29–58 the composition is skewed to polar residues; sequence SSFTAHQSSVTTHVPVPDQTSPGVQTTPPI. Residues 70–79 are compositionally biased toward low complexity; that stretch reads QTAAKTKTQQ. The helical transmembrane segment at 147–164 threads the bilayer; the sequence is LLVAAVLFITGIIILTSG. Residues 165–178 lie on the Cytoplasmic side of the membrane; it reads KCRQFSQLCLNRHR.

It belongs to the FXYD family. In terms of assembly, regulatory subunit of the sodium/potassium-transporting ATPase which is composed of a catalytic alpha subunit, a non-catalytic beta subunit and an additional regulatory subunit. The regulatory subunit, a member of the FXYD protein family, modulates the enzymatic activity in a tissue- and isoform-specific way by changing affinities of the Na+/K+-ATPase toward Na(+), K(+) or ATP. Post-translationally, glycosylated. As to expression, spleen, lung, skeletal muscle, and testis.

Its subcellular location is the cell membrane. The protein resides in the basolateral cell membrane. Associates with and regulates the activity of the sodium/potassium-transporting ATPase (NKA) which catalyzes the hydrolysis of ATP coupled with the exchange of Na(+) and K(+) ions across the plasma membrane. May increase NKA activity by increasing the apparent affinity for Na(+). Involved in down-regulation of E-cadherin which results in reduced cell adhesion. Promotes metastasis. This Rattus norvegicus (Rat) protein is FXYD domain-containing ion transport regulator 5 (Fxyd5).